A 205-amino-acid chain; its full sequence is CASP-like protein 0U1 (205 aa).

Over 1–66 (MSGGDIDPTA…GYHKFAVFQF (66 aa)) the chain is Cytoplasmic. One can recognise an MARVEL domain in the interval 10–162 (AINSPKFRLI…SMMFTWKEWR (153 aa)). A helical transmembrane segment spans residues 67-87 (LVVICVTYWLFTMLWMGMYLI). Residues 88–90 (QKV) are Extracellular-facing. The helical transmembrane segment at 91 to 111 (PPAGTEFMIYAVFNVLILIAF) threads the bilayer. Over 112-137 (STSWTECNETIVDPTYPVCKRATGAK) the chain is Cytoplasmic. Residues 138–158 (ASIAFAMFTWLALCVSMMFTW) traverse the membrane as a helical segment. Over 159-167 (KEWRDQNYE) the chain is Extracellular. A helical membrane pass occupies residues 168-188 (GLPIFGDFSSFMPGGGGGGMG). Topologically, residues 189-205 (GGGGYERPSDVNTQTYA) are cytoplasmic.

This sequence belongs to the Casparian strip membrane proteins (CASP) family. In terms of assembly, homodimer and heterodimers.

The protein resides in the cell membrane. This is CASP-like protein 0U1 from Micromonas pusilla (strain CCMP1545) (Picoplanktonic green alga).